The chain runs to 134 residues: Putative pre-16S rRNA nuclease (134 aa).

It belongs to the YqgF nuclease family.

The protein localises to the cytoplasm. Its function is as follows. Could be a nuclease involved in processing of the 5'-end of pre-16S rRNA. In Helicobacter pylori (strain HPAG1), this protein is Putative pre-16S rRNA nuclease.